Reading from the N-terminus, the 480-residue chain is Glutamate--tRNA ligase 2 (480 aa).

The short motif at 15–25 (PSPTGYLHVGG) is the 'HIGH' region element. The short motif at 248–252 (RLSKR) is the 'KMSKS' region element. K251 contacts ATP.

The protein belongs to the class-I aminoacyl-tRNA synthetase family. Glutamate--tRNA ligase type 1 subfamily. As to quaternary structure, monomer.

The protein resides in the cytoplasm. The catalysed reaction is tRNA(Glu) + L-glutamate + ATP = L-glutamyl-tRNA(Glu) + AMP + diphosphate. Functionally, catalyzes the attachment of glutamate to tRNA(Glu) in a two-step reaction: glutamate is first activated by ATP to form Glu-AMP and then transferred to the acceptor end of tRNA(Glu). The sequence is that of Glutamate--tRNA ligase 2 from Koribacter versatilis (strain Ellin345).